We begin with the raw amino-acid sequence, 538 residues long: MKMRRYKLFLMFCMAGLCLISFLHFFKTLSYVTFPRELASLSPNLISSFFWNNAPVTPQASPEPGDPDLLRTPLYSHSPLLQPLSPSKATEELHRVDFVLPEDTTEYFVRTKAGGVCFKPGTRMLEKPSPGRTEEKTEVSEGSSARGPARRPMRHVLSSRERLGSRGTRRKWVECVCLPGWHGPSCGVPTVVQYSNLPTKERLVPREVPRRVINAININHEFDLLDVRFHELGDVVDAFVVCDSNFTAYGEPRPLKFREMLTNGTFEYIRHKVLYVFLDHFPPGGRQDGWIADDYLRTFLTQDGVSRLRNLRPDDVFIIDDADEIPARDGVLFLKLYDGWTEPFAFHMRKSLYGFFWKQPGTLEVVSGCTMDMLQAVYGLDGIRLRRRQYYTMPNFRQYENRTGHILVQWSLGSPLHFAGWHCSWCFTPEGIYFKLVSAQNGDFPRWGDYEDKRDLNYIRSLIRTGGWFDGTQQEYPPADPSEHMYAPKYLLKNYDQFRYLLENPYREPKSTVEGGRQNQGSDGRSSAVRGKLDTAEG.

The Cytoplasmic portion of the chain corresponds to 1–7 (MKMRRYK). Residues 8-23 (LFLMFCMAGLCLISFL) traverse the membrane as a helical; Signal-anchor for type II membrane protein segment. Over 24–538 (HFFKTLSYVT…VRGKLDTAEG (515 aa)) the chain is Lumenal. A disordered region spans residues 120 to 161 (PGTRMLEKPSPGRTEEKTEVSEGSSARGPARRPMRHVLSSRE). Residues Asn-245, Asn-263, and Asn-401 are each glycosylated (N-linked (GlcNAc...) asparagine). The disordered stretch occupies residues 507–538 (REPKSTVEGGRQNQGSDGRSSAVRGKLDTAEG).

Belongs to the glycosyltransferase 17 family. Interacts with MGAT4D. As to expression, highly expressed in brain and kidney and to a much lesser extent in stomach, heart, intestine, uterus, testis, ovary and lung. Not present in spleen, liver and muscle. In brain, expressed in neurons of hippocampus.

Its subcellular location is the golgi apparatus membrane. It carries out the reaction N(4)-{beta-D-GlcNAc-(1-&gt;2)-alpha-D-Man-(1-&gt;3)-[beta-D-GlcNAc-(1-&gt;2)-alpha-D-Man-(1-&gt;6)]-beta-D-Man-(1-&gt;4)-beta-D-GlcNAc-(1-&gt;4)-beta-D-GlcNAc}-L-asparaginyl-[protein] + UDP-N-acetyl-alpha-D-glucosamine = N(4)-{beta-D-GlcNAc-(1-&gt;2)-alpha-D-Man-(1-&gt;3)-[beta-D-GlcNAc-(1-&gt;4)]-[beta-D-GlcNAc-(1-&gt;2)-alpha-D-Man-(1-&gt;6)]-beta-D-Man-(1-&gt;4)-beta-D-GlcNAc-(1-&gt;4)-beta-D-GlcNAc}-L-asparaginyl-[protein] + UDP + H(+). Its pathway is protein modification; protein glycosylation. Its function is as follows. It is involved in the regulation of the biosynthesis and biological function of glycoprotein oligosaccharides. Catalyzes the addition of N-acetylglucosamine in beta 1-4 linkage to the beta-linked mannose of the trimannosyl core of N-linked sugar chains, called bisecting N-acetylglucosamine (GlcNAc). It is one of the most important enzymes involved in the regulation of the biosynthesis of glycoprotein oligosaccharides. The addition of this bisecting GlcNAc residue alters not only the composition, but also the conformation of the N-glycan. The introduction of the bisecting GlcNAc residue results in the suppression of further processing and elongation of N-glycans, precluding the formation of beta-1,6 GlcNAc branching, catalyzed by MGAT5 since it is unable to use the bisected oligosaccharide as a substrate. Addition of bisecting N-acetylglucosamine to CDH1/E-cadherin modulates CDH1 cell membrane location. Inhibits NeuAc-alpha-2,3-Gal-beta-1,4-GlcNAc- formation which modulates sialylation levels and plays a role in cell migration regulation. In brain, addition of bisecting N-acetylglucosamine to BACE1 blocks its lysosomal targeting in response to oxidative stress and further degradation which increases its location to early endosome and the APP cleavage. The sequence is that of Beta-1,4-mannosyl-glycoprotein 4-beta-N-acetylglucosaminyltransferase from Mus musculus (Mouse).